The primary structure comprises 193 residues: uncharacterized protein (193 aa).

A helical transmembrane segment spans residues Leu-119 to Trp-143.

It is found in the mitochondrion membrane. This is an uncharacterized protein from Saccharomyces cerevisiae (strain ATCC 204508 / S288c) (Baker's yeast).